The chain runs to 395 residues: S-adenosylmethionine synthase (395 aa).

His15 contacts ATP. Residue Asp17 coordinates Mg(2+). Glu43 is a K(+) binding site. Residues Glu56 and Gln99 each coordinate L-methionine. The interval 99-109 is flexible loop; it reads QSADIALGVDE. ATP is bound by residues 174-176, 240-241, Asp249, 255-256, Ala272, and Lys276; these read DGK, RF, and RK. Asp249 contributes to the L-methionine binding site. Lys280 lines the L-methionine pocket.

Belongs to the AdoMet synthase family. Homotetramer; dimer of dimers. Mg(2+) serves as cofactor. The cofactor is K(+).

It is found in the cytoplasm. It carries out the reaction L-methionine + ATP + H2O = S-adenosyl-L-methionine + phosphate + diphosphate. It functions in the pathway amino-acid biosynthesis; S-adenosyl-L-methionine biosynthesis; S-adenosyl-L-methionine from L-methionine: step 1/1. Functionally, catalyzes the formation of S-adenosylmethionine (AdoMet) from methionine and ATP. The overall synthetic reaction is composed of two sequential steps, AdoMet formation and the subsequent tripolyphosphate hydrolysis which occurs prior to release of AdoMet from the enzyme. The chain is S-adenosylmethionine synthase from Alkaliphilus oremlandii (strain OhILAs) (Clostridium oremlandii (strain OhILAs)).